The sequence spans 268 residues: MDFTAKIKELERELSETSDYKTLQKKTISLRSELNTLSHSLTSYEKEHFSNDIENVLKSINAKLSESKGKKRLFSFKQKNSSSAVHKNVERTELANAPAYTTTLKKHYVLEKGDSAFENLEFCTVTSTTDYSGNSALSGSLCFRNITKCVINLQRIFFQTGSIFITDCTDSIIFLRSPSDKDFQIRLRDLKNCKILIEKLSPSIDCKQVVIIENCHKCIFNASTRDHLIIQDFSNPFQSEETEDNSAFAFEDFDICNKDTMQLFRAYL.

In terms of domain architecture, C-CAP/cofactor C-like spans 98 to 255 (PAYTTTLKKH…SAFAFEDFDI (158 aa)).

The protein resides in the cytoplasm. It localises to the cytoskeleton. Its function is as follows. Tubulin-folding protein; involved in the early step of the tubulin folding pathway. The sequence is that of Tubulin-specific chaperone C (CIN2) from Saccharomyces cerevisiae (strain ATCC 204508 / S288c) (Baker's yeast).